A 310-amino-acid chain; its full sequence is Malate dehydrogenase (310 aa).

NAD(+)-binding positions include 7–12 and Asp32; that span reads GAGNVG. Residues Arg81 and Arg87 each coordinate substrate. Residues Asn94 and 117–119 each bind NAD(+); that span reads VSN. Substrate contacts are provided by Asn119 and Arg150. His174 functions as the Proton acceptor in the catalytic mechanism.

The protein belongs to the LDH/MDH superfamily. MDH type 3 family.

The enzyme catalyses (S)-malate + NAD(+) = oxaloacetate + NADH + H(+). Catalyzes the reversible oxidation of malate to oxaloacetate. This is Malate dehydrogenase from Chloroherpeton thalassium (strain ATCC 35110 / GB-78).